Reading from the N-terminus, the 826-residue chain is G-protein coupled receptor-associated sorting protein 2 (826 aa).

Disordered regions lie at residues 1 to 126 (MTGA…AQAW), 204 to 286 (WCYP…NPFC), 336 to 371 (EGNRFRRRDKEEPNKTLKNENEKDVKNDETVEQESR), and 506 to 534 (IPEGASGNSEEKAKNAELGAEGEEQDSVA). Positions 13–31 (KPDKKPQEEVAGGAERESE) are enriched in basic and acidic residues. A compositionally biased stretch (polar residues) spans 59 to 73 (SSRARPKTETQSVSG). Residues 231 to 247 (TREETSIRSWPREEVNT) are compositionally biased toward basic and acidic residues. The span at 248–264 (RSRHRAKHQTNARSKPR) shows a compositional bias: basic residues. S275 and S277 each carry phosphoserine.

Belongs to the GPRASP family. As to quaternary structure, interacts with cytoplasmic tails of a variety of G-protein coupled receptors such as muscarinic acetylcholine receptor M1/CHRM1 and calcitonin receptor/CALCR. Strongly expressed in the brain and the cochlea. Also in lung and muscle tissues. Localized in multiple structures of the cochlea, detected in the spiral ganglion, stria vascularis, spiral ligament, inner and outer hair cells.

Functionally, may play a role in regulation of a variety of G-protein coupled receptors. This Mus musculus (Mouse) protein is G-protein coupled receptor-associated sorting protein 2 (Gprasp2).